The following is a 393-amino-acid chain: Lipid-A-disaccharide synthase (393 aa).

This sequence belongs to the LpxB family.

The enzyme catalyses a lipid X + a UDP-2-N,3-O-bis[(3R)-3-hydroxyacyl]-alpha-D-glucosamine = a lipid A disaccharide + UDP + H(+). The protein operates within bacterial outer membrane biogenesis; LPS lipid A biosynthesis. Condensation of UDP-2,3-diacylglucosamine and 2,3-diacylglucosamine-1-phosphate to form lipid A disaccharide, a precursor of lipid A, a phosphorylated glycolipid that anchors the lipopolysaccharide to the outer membrane of the cell. The sequence is that of Lipid-A-disaccharide synthase from Rhodopseudomonas palustris (strain ATCC BAA-98 / CGA009).